Reading from the N-terminus, the 477-residue chain is Glycogen synthase (477 aa).

K15 provides a ligand contact to ADP-alpha-D-glucose.

It belongs to the glycosyltransferase 1 family. Bacterial/plant glycogen synthase subfamily.

It catalyses the reaction [(1-&gt;4)-alpha-D-glucosyl](n) + ADP-alpha-D-glucose = [(1-&gt;4)-alpha-D-glucosyl](n+1) + ADP + H(+). The protein operates within glycan biosynthesis; glycogen biosynthesis. Functionally, synthesizes alpha-1,4-glucan chains using ADP-glucose. This is Glycogen synthase from Cronobacter sakazakii (strain ATCC BAA-894) (Enterobacter sakazakii).